A 619-amino-acid chain; its full sequence is Vitamin B12 transporter BtuB (619 aa).

An N-terminal signal peptide occupies residues 1 to 25; sequence MINKKRLLLSTVSIMVISGWNQASA. Positions 31–38 match the TonB box motif; the sequence is DSLVVTAS. In terms of domain architecture, TBDR plug spans 43–157; sequence PISSILAPYT…IGGVINIITT (115 aa). Cyanocob(III)alamin-binding positions include Leu-88, Ser-90, and 115–116; that span reads IS. The region spanning 160–619 is the TBDR beta-barrel domain; that stretch reads KLGTSLNVGI…EYYLTGSYNF (460 aa). Transmembrane regions (beta stranded) follow at residues 163–170, 174–183, and 189–200; these read TSLNVGIG, YQTYDGATQQ, and TVLTAAANYTYT. 4 residues coordinate Ca(2+): Asp-204, Gln-216, Asp-218, and Asp-220. The next 2 beta stranded transmembrane spans lie at 222–232 and 237–253; these read FMSKMLWLGVD and EQVS…NRTS. Residues Tyr-254 and Asp-255 each contribute to the Ca(2+) site. Ala-256 serves as a coordination point for cyanocob(III)alamin. Asp-268 contributes to the Ca(2+) binding site. 17 beta stranded membrane-spanning segments follow: residues 270–284, 286–303, 316–332, 335–344, 360–376, 378–388, 392–407, 410–424, 441–450, 456–465, 478–495, 499–514, 522–534, 540–556, 563–577, 590–601, and 607–619; these read RELY…VRFN, GIYS…KDYN, SLND…NTFQ, QGIVSTGVDF, KTVR…QQLK, FILEGAIRSDK, AGWN…WEFI, YRLI…KAPT, ESKQWEGGIE, LTWRMTVYRN, YYNI…TGLI, MFQH…PRNS, RRAK…QLDW, DWGL…DKDF, RVKL…LTVS, IANLLDKDYETV, and PGRE…SYNF. Ser-316 lines the cyanocob(III)alamin pocket. Residue Arg-522 coordinates cyanocob(III)alamin. The TonB C-terminal box signature appears at 602 to 619; the sequence is YGYRIPGREYYLTGSYNF.

The protein belongs to the TonB-dependent receptor family. BtuB (TC 1.B.14.3.1) subfamily.

It localises to the cell outer membrane. Its function is as follows. Involved in the active translocation of vitamin B12 (cyanocobalamin) across the outer membrane to the periplasmic space. It derives its energy for transport by interacting with the trans-periplasmic membrane protein TonB. This Photorhabdus laumondii subsp. laumondii (strain DSM 15139 / CIP 105565 / TT01) (Photorhabdus luminescens subsp. laumondii) protein is Vitamin B12 transporter BtuB.